The following is a 156-amino-acid chain: MPRKGSVAKRDVLPDPVYNSKLVTRLINHLMIDGKRGKASTILYDAFDMIKKQTGNEPLDVFEEAMKNVMPVLEVKARRIGGSNYQVPIEVRPDRRTTLGLRWIVQYSRQRGEHTMDERLAKEIMDAANNTGAAVKKREDTHKMADANRAFAHYRW.

The protein belongs to the universal ribosomal protein uS7 family. In terms of assembly, part of the 30S ribosomal subunit. Contacts proteins S9 and S11.

Its function is as follows. One of the primary rRNA binding proteins, it binds directly to 16S rRNA where it nucleates assembly of the head domain of the 30S subunit. Is located at the subunit interface close to the decoding center, probably blocks exit of the E-site tRNA. In Lacticaseibacillus casei (strain BL23) (Lactobacillus casei), this protein is Small ribosomal subunit protein uS7.